The primary structure comprises 455 residues: D-inositol 3-phosphate glycosyltransferase (455 aa).

Residues 1-25 are disordered; the sequence is MSQHVSRLGGLRGRSHGHGAFGGPY. His-45 is a 1D-myo-inositol 3-phosphate binding site. UDP-N-acetyl-alpha-D-glucosamine is bound by residues 51 to 52 and Gly-59; that span reads QP. Residues 56–61, Lys-114, Tyr-147, Thr-171, and Arg-191 contribute to the 1D-myo-inositol 3-phosphate site; that span reads DAGGMN. UDP-N-acetyl-alpha-D-glucosamine-binding residues include Arg-266 and Lys-271. Residues Tyr-341, Arg-342, and Ala-344 each coordinate Mg(2+). The UDP-N-acetyl-alpha-D-glucosamine site is built by Glu-354 and Glu-362. Thr-368 is a binding site for Mg(2+).

This sequence belongs to the glycosyltransferase group 1 family. MshA subfamily. Homodimer.

The catalysed reaction is 1D-myo-inositol 3-phosphate + UDP-N-acetyl-alpha-D-glucosamine = 1D-myo-inositol 2-acetamido-2-deoxy-alpha-D-glucopyranoside 3-phosphate + UDP + H(+). In terms of biological role, catalyzes the transfer of a N-acetyl-glucosamine moiety to 1D-myo-inositol 3-phosphate to produce 1D-myo-inositol 2-acetamido-2-deoxy-glucopyranoside 3-phosphate in the mycothiol biosynthesis pathway. This is D-inositol 3-phosphate glycosyltransferase from Streptomyces bingchenggensis (strain BCW-1).